Here is a 152-residue protein sequence, read N- to C-terminus: Transmembrane protein 35B (152 aa).

Residues 1-21 form the signal peptide; that stretch reads MLVSLGALRVLLGIFFTLTGA. The next 3 helical transmembrane spans lie at 62 to 82, 85 to 105, and 111 to 131; these read AAVG…PPVL, ISNV…VVLE, and YIPA…QFLV.

This sequence belongs to the DoxX family.

It is found in the membrane. The sequence is that of Transmembrane protein 35B from Rattus norvegicus (Rat).